The primary structure comprises 333 residues: MKQTVYTASPESQQIHVWRLEPQGTLTLLQVVDAPGQVQPMVISPDKRFLYVGVRPEFRVIAYRIAAHDGTLSEAGEAPLPGSPTHISTDHTGRFLFSGSYNAGSVSVVRLNDGLPGETVTVVEGLEGCHSANISPDNRTLWVPALKQDRICLFTLTDDGHLEPQTPAEVTTVAGAGPRHMVFHPSKPFAYCVNELNSSVDVWALSDPHGNIECVQTLDMMPADFSDTRWAADIHITPDGRHLYACDRTASVITVFTVSEDGSVLAVQGHQPTETQPRGFNIDNSGQYLIAAGQKSHHIAVYGIEGEQGLLAEKGRYAVGQGPMWVVINAFDA.

This sequence belongs to the cycloisomerase 2 family.

The catalysed reaction is 6-phospho-D-glucono-1,5-lactone + H2O = 6-phospho-D-gluconate + H(+). The protein operates within carbohydrate degradation; pentose phosphate pathway; D-ribulose 5-phosphate from D-glucose 6-phosphate (oxidative stage): step 2/3. Functionally, catalyzes the hydrolysis of 6-phosphogluconolactone to 6-phosphogluconate. The protein is 6-phosphogluconolactonase of Cronobacter sakazakii (strain ATCC BAA-894) (Enterobacter sakazakii).